The sequence spans 381 residues: Cytochrome b (381 aa).

A run of 4 helical transmembrane segments spans residues 34–54 (FGSH…FLAM), 78–99 (WLIR…YLHI), 114–134 (WNIG…GYVL), and 179–199 (FFAF…IHLL). Residues His84 and His98 each contribute to the heme b site. The heme b site is built by His183 and His197. His202 serves as a coordination point for a ubiquinone. The next 4 membrane-spanning stretches (helical) occupy residues 227–247 (YKDL…ALFM), 289–309 (LGGV…PLLH), 321–341 (MTQI…WIGG), and 348–368 (FIMV…IIMP).

Belongs to the cytochrome b family. In terms of assembly, the cytochrome bc1 complex contains 3 respiratory subunits (MT-CYB, CYC1 and UQCRFS1), 2 core proteins (UQCRC1 and UQCRC2) and probably 6 low-molecular weight proteins. Heme b is required as a cofactor.

Its subcellular location is the mitochondrion inner membrane. In terms of biological role, component of the ubiquinol-cytochrome c reductase complex (complex III or cytochrome b-c1 complex) that is part of the mitochondrial respiratory chain. The b-c1 complex mediates electron transfer from ubiquinol to cytochrome c. Contributes to the generation of a proton gradient across the mitochondrial membrane that is then used for ATP synthesis. This Carcharhinus porosus (Smalltail shark) protein is Cytochrome b (mt-cyb).